The primary structure comprises 727 residues: 1,4-alpha-glucan branching enzyme GlgB (727 aa).

The active-site Nucleophile is the aspartate 405. The active-site Proton donor is glutamate 458.

The protein belongs to the glycosyl hydrolase 13 family. GlgB subfamily. Monomer.

It catalyses the reaction Transfers a segment of a (1-&gt;4)-alpha-D-glucan chain to a primary hydroxy group in a similar glucan chain.. Its pathway is glycan biosynthesis; glycogen biosynthesis. Its function is as follows. Catalyzes the formation of the alpha-1,6-glucosidic linkages in glycogen by scission of a 1,4-alpha-linked oligosaccharide from growing alpha-1,4-glucan chains and the subsequent attachment of the oligosaccharide to the alpha-1,6 position. This Yersinia pseudotuberculosis serotype I (strain IP32953) protein is 1,4-alpha-glucan branching enzyme GlgB.